Here is a 341-residue protein sequence, read N- to C-terminus: Methionine import ATP-binding protein MetN 3 (341 aa).

The region spanning 2 to 241 (ILLENVKKIY…PQQDITKRFV (240 aa)) is the ABC transporter domain. 38-45 (GYSGAGKS) contacts ATP.

This sequence belongs to the ABC transporter superfamily. Methionine importer (TC 3.A.1.24) family. In terms of assembly, the complex is composed of two ATP-binding proteins (MetN), two transmembrane proteins (MetI) and a solute-binding protein (MetQ).

The protein resides in the cell membrane. It carries out the reaction L-methionine(out) + ATP + H2O = L-methionine(in) + ADP + phosphate + H(+). It catalyses the reaction D-methionine(out) + ATP + H2O = D-methionine(in) + ADP + phosphate + H(+). Part of the ABC transporter complex MetNIQ involved in methionine import. Responsible for energy coupling to the transport system. This Bacillus cereus (strain ATCC 10987 / NRS 248) protein is Methionine import ATP-binding protein MetN 3.